The sequence spans 146 residues: Large ribosomal subunit protein uL15 (146 aa).

Positions 1–56 are disordered; sequence MSDIQLNTLKPAEGSKHAKRRVGRGIGSGLGKTAGRGHKGQKSRSGGFHKVGFEGG. The segment covering 24–34 has biased composition (gly residues); that stretch reads RGIGSGLGKTA.

Belongs to the universal ribosomal protein uL15 family. Part of the 50S ribosomal subunit.

Binds to the 23S rRNA. The sequence is that of Large ribosomal subunit protein uL15 from Bordetella bronchiseptica (strain ATCC BAA-588 / NCTC 13252 / RB50) (Alcaligenes bronchisepticus).